The primary structure comprises 601 residues: Sestrin homolog (601 aa).

Residues 1–11 (MISMGMTSKGQ) are compositionally biased toward polar residues. Residues 1 to 58 (MISMGMTSKGQNVDGAPAGNSSSEWIISSSSSPFQANKRYSLDPPFGSDYSPPASPQN) are disordered. An N-linked (GlcNAc...) asparagine glycan is attached at Asn-20. Residues 21–32 (SSSEWIISSSSS) show a composition bias toward low complexity. N-linked (GlcNAc...) asparagine glycans are attached at residues Asn-322 and Asn-330. A disordered region spans residues 355–425 (RRSQQQDDDD…DSSSSTLSQS (71 aa)). Over residues 368–379 (LHDRQQDFHNAG) the composition is skewed to basic and acidic residues. The span at 380 to 425 (DDSQSSNNNTTTTTTTTTTTTTTTNTNTTSNSAGGGDSSSSTLSQS) shows a compositional bias: low complexity. N-linked (GlcNAc...) asparagine glycosylation is found at Asn-387, Asn-388, Asn-406, Asn-438, and Asn-499.

The protein belongs to the sestrin family.

Its subcellular location is the nucleus. It is found in the cytoplasm. In terms of biological role, may function as a negative feedback regulator of TOR function. The polypeptide is Sestrin homolog (Dictyostelium discoideum (Social amoeba)).